A 136-amino-acid polypeptide reads, in one-letter code: Glutaredoxin-C7 (136 aa).

The 107-residue stretch at 29-135 (LLRIESLASE…PLLKDAGALW (107 aa)) folds into the Glutaredoxin domain. Cysteine 49 and cysteine 52 are joined by a disulfide. The short motif at 133 to 136 (ALWL) is the Responsive for interaction with TGA factors element.

It belongs to the glutaredoxin family. CC-type subfamily. Interacts with TGA2, TGA3, TGA7 and PAN. Interacts with TGA9 and TGA10 in the nucleus. As to expression, highly expressed in inflorescences, roots, and siliques. Expressed at lower levels in mature flowers.

It is found in the cytoplasm. Its subcellular location is the nucleus. Its function is as follows. Has a glutathione-disulfide oxidoreductase activity in the presence of NADPH and glutathione reductase. Reduces low molecular weight disulfides and proteins. Involved in flower development as a regulator of petal primorida initiation and further petal morphogenesis. May mediate post-translational modifications of target proteins required for normal petal organ initiation and morphogenesis. ROXY1/TGA protein interactions can occur in vivo and support their biological relevance in petal development. May be involved in the regulation of the floral regulator class C gene AG (AGAMOUS). This chain is Glutaredoxin-C7 (GRXC7), found in Arabidopsis thaliana (Mouse-ear cress).